The following is a 348-amino-acid chain: Delta(6)-protoilludene synthase 18 (348 aa).

Aspartate 87, asparagine 223, serine 227, and glutamate 231 together coordinate Mg(2+). The DDXXD motif signature appears at 87-91 (DEYTD). Positions 223–231 (NDLVSYNRE) match the NSE/DTE motif motif. Residues arginine 311 and tyrosine 312 each contribute to the (2E,6E)-farnesyl diphosphate site.

The protein belongs to the terpene synthase family. It depends on Mg(2+) as a cofactor.

It carries out the reaction (2E,6E)-farnesyl diphosphate = Delta(6)-protoilludene + diphosphate. In terms of biological role, terpene cyclase that catalyzes the cyclization of farnesyl diphosphate (FPP) to delta(6)-protoilludene. This Postia placenta (strain ATCC 44394 / Madison 698-R) (Brown rot fungus) protein is Delta(6)-protoilludene synthase 18.